Reading from the N-terminus, the 512-residue chain is Tyrosine-protein kinase Lyn (512 aa).

Positions 1-62 are disordered; it reads MGCIKSKGKD…GQRFQTKDPE (62 aa). G2 carries N-myristoyl glycine lipidation. C3 carries S-palmitoyl cysteine lipidation. Phosphoserine is present on residues S11 and S13. Positions 63 to 123 constitute an SH3 domain; it reads EQGDIVVALY…PSNYVAKLNT (61 aa). The SH2 domain occupies 129-226; sequence WFFKDITRKD…GLCRRLEKAC (98 aa). Y193 is modified (phosphotyrosine). At S228 the chain carries Phosphoserine. One can recognise a Protein kinase domain in the interval 247–501; sequence IKLVKRLGAG…YLQSVLDDFY (255 aa). ATP contacts are provided by residues 253–261 and K275; that span reads LGAGQFGEV. Phosphotyrosine occurs at positions 306 and 316. D367 serves as the catalytic Proton acceptor. Y397 carries the post-translational modification Phosphotyrosine; by autocatalysis. Residues Y460 and Y473 each carry the phosphotyrosine modification. Y508 carries the phosphotyrosine; by autocatalysis, CSK and MATK modification.

This sequence belongs to the protein kinase superfamily. Tyr protein kinase family. SRC subfamily. Interacts with TEC. Interacts (via SH2 domain) with FLT3 (tyrosine phosphorylated). Interacts with LIME1 and with CD79A upon activation of the B-cell antigen receptor. Interacts with the B-cell receptor complex. Interacts with phosphorylated THEMIS2. Interacts with EPOR. Interacts with MS4A2/FCER1B. Interaction (via the SH2 and SH3 domains) with MUC1 is stimulated by IL7 and the subsequent phosphorylation increases the binding between MUC1 and CTNNB1/beta-catenin. Interacts with ADAM15. Interacts with NDFIP2 and more weakly with NDFIP1. Interacts with FASLG. Interacts with KIT. Interacts with HCLS1. Interacts with FCGR2B. Interacts with FCGR1A; the interaction may be indirect. Interacts with CD19, CD22, CD79A and CD79B. Interacts (via SH3 domain) with CBLC, PPP1R15A and PDE4A. Interacts with TGFB1I1. Interacts (via SH3 domain) with PIK3R1, the regulatory subunit of phosphatidylinositol 3-kinase; this interaction enhances phosphatidylinositol 3-kinase activity. Interacts with CSF2RB, the common subunit of the IL3, IL5 and CSF2 receptors. Interacts with PAG1; identified in a complex with PAG1 and STAT3. Interacts with ABL1. Interacts with PTPN6/SHP-1. Interacts (via SH3 domain) with SCIMP (via proline-rich region). This interaction facilitates the phosphorylation of SCIMP on 'Tyr-107', which enhances binding of SCIMP to TLR4, and consequently the phosphorylation of TLR4 in response to stimulation by lipopolysaccharide in macrophages. Interacts with LPXN (via LD motif 3) and the interaction is induced upon B-cell antigen receptor (BCR) activation. Interacts (via SH3-domain) with ANKRD54 (via ankyrin repeat region) in an activation-independent status of LYN. Forms a multiprotein complex with ANKRD54 and HCLS1. Interacts (via SH2 and SH3 domains) with UNC119; leading to LYN activation. Interacts with CD36. Interacts with LYN. Interacts with SKAP1 and FYB1; this interaction promotes the phosphorylation of CLNK. Interacts with BCAR1/CAS and NEDD9/HEF1. In terms of assembly, (Microbial infection) Interacts with Epstein-Barr virus LMP2A. As to quaternary structure, (Microbial infection) Interacts with Herpes virus saimiri tyrosine kinase interacting protein (Tip). Ubiquitinated by CBL, leading to its degradation. Ubiquitination is SH3-dependent. In terms of processing, autophosphorylated. Phosphorylated on tyrosine residues in response to KIT signaling. Phosphorylation at Tyr-397 is required for optimal activity. Phosphorylation at Tyr-508 inhibits kinase activity. Phosphorylated at Tyr-508 by CSK. Dephosphorylated by PTPRC/CD45. Becomes rapidly phosphorylated upon activation of the B-cell receptor and the immunoglobulin receptor FCGR1A. Phosphorylated in response to ITGB1 in B-cells. Detected in monocytes (at protein level). Detected in placenta, and in fetal brain, lung, liver and kidney. Widely expressed in a variety of organs, tissues, and cell types such as epidermoid, hematopoietic, and neuronal cells. Expressed in primary neuroblastoma tumors.

It is found in the cell membrane. The protein resides in the nucleus. The protein localises to the cytoplasm. Its subcellular location is the perinuclear region. It localises to the golgi apparatus. It is found in the membrane. It catalyses the reaction L-tyrosyl-[protein] + ATP = O-phospho-L-tyrosyl-[protein] + ADP + H(+). Subject to autoinhibition, mediated by intramolecular interactions between the SH2 domain and the C-terminal phosphotyrosine. Phosphorylation at Tyr-397 is required for optimal activity. Phosphorylated by CSK at Tyr-508; phosphorylation at Tyr-508 inhibits kinase activity. Kinase activity is modulated by dephosphorylation by PTPRC/CD45. Inhibited by Dasatinib, PP2, and SU6656. In terms of biological role, non-receptor tyrosine-protein kinase that transmits signals from cell surface receptors and plays an important role in the regulation of innate and adaptive immune responses, hematopoiesis, responses to growth factors and cytokines, integrin signaling, but also responses to DNA damage and genotoxic agents. Functions primarily as negative regulator, but can also function as activator, depending on the context. Required for the initiation of the B-cell response, but also for its down-regulation and termination. Plays an important role in the regulation of B-cell differentiation, proliferation, survival and apoptosis, and is important for immune self-tolerance. Acts downstream of several immune receptors, including the B-cell receptor, CD79A, CD79B, CD5, CD19, CD22, FCER1, FCGR2, FCGR1A, TLR2 and TLR4. Plays a role in the inflammatory response to bacterial lipopolysaccharide. Mediates the responses to cytokines and growth factors in hematopoietic progenitors, platelets, erythrocytes, and in mature myeloid cells, such as dendritic cells, neutrophils and eosinophils. Acts downstream of EPOR, KIT, MPL, the chemokine receptor CXCR4, as well as the receptors for IL3, IL5 and CSF2. Plays an important role in integrin signaling. Regulates cell proliferation, survival, differentiation, migration, adhesion, degranulation, and cytokine release. Involved in the regulation of endothelial activation, neutrophil adhesion and transendothelial migration. Down-regulates signaling pathways by phosphorylation of immunoreceptor tyrosine-based inhibitory motifs (ITIM), that then serve as binding sites for phosphatases, such as PTPN6/SHP-1, PTPN11/SHP-2 and INPP5D/SHIP-1, that modulate signaling by dephosphorylation of kinases and their substrates. Phosphorylates LIME1 in response to CD22 activation. Phosphorylates BTK, CBL, CD5, CD19, CD72, CD79A, CD79B, CSF2RB, DOK1, HCLS1, LILRB3/PIR-B, MS4A2/FCER1B, SYK and TEC. Promotes phosphorylation of SIRPA, PTPN6/SHP-1, PTPN11/SHP-2 and INPP5D/SHIP-1. Mediates phosphorylation of the BCR-ABL fusion protein. Required for rapid phosphorylation of FER in response to FCER1 activation. Mediates KIT phosphorylation. Acts as an effector of EPOR (erythropoietin receptor) in controlling KIT expression and may play a role in erythroid differentiation during the switch between proliferation and maturation. Depending on the context, activates or inhibits several signaling cascades. Regulates phosphatidylinositol 3-kinase activity and AKT1 activation. Regulates activation of the MAP kinase signaling cascade, including activation of MAP2K1/MEK1, MAPK1/ERK2, MAPK3/ERK1, MAPK8/JNK1 and MAPK9/JNK2. Mediates activation of STAT5A and/or STAT5B. Phosphorylates LPXN on 'Tyr-72'. Kinase activity facilitates TLR4-TLR6 heterodimerization and signal initiation. Phosphorylates SCIMP on 'Tyr-107'; this enhances binding of SCIMP to TLR4, promoting the phosphorylation of TLR4, and a selective cytokine response to lipopolysaccharide in macrophages. Phosphorylates CLNK. Phosphorylates BCAR1/CAS and NEDD9/HEF1. This Homo sapiens (Human) protein is Tyrosine-protein kinase Lyn (LYN).